The primary structure comprises 113 residues: Ribulose bisphosphate carboxylase small subunit (113 aa).

Belongs to the RuBisCO small chain family. In terms of assembly, heterohexadecamer of 8 large and 8 small subunits. RuBisCO interacts with the C-terminus of CcmM, and can be found in complexes that also include carbonic anhydrase (ccaA).

It localises to the carboxysome. Its function is as follows. RuBisCO catalyzes two reactions: the carboxylation of D-ribulose 1,5-bisphosphate, the primary event in carbon dioxide fixation, as well as the oxidative fragmentation of the pentose substrate in the photorespiration process. Both reactions occur simultaneously and in competition at the same active site. Although the small subunit is not catalytic it is essential for maximal activity. The protein is Ribulose bisphosphate carboxylase small subunit of Synechocystis sp. (strain ATCC 27184 / PCC 6803 / Kazusa).